Consider the following 528-residue polypeptide: Gamma-taxilin (528 aa).

A compositionally biased stretch (basic and acidic residues) spans 1 to 10; the sequence is MATRVEEAAR. The disordered stretch occupies residues 1 to 36; sequence MATRVEEAARGRGGGAEEATEAGRGGRRRSPRQKFE. Arginine 12 and arginine 24 each carry omega-N-methylarginine. A phosphoserine mark is found at serine 79, serine 86, serine 97, and serine 105. The disordered stretch occupies residues 102-130; sequence TQESREEIPGGEARTDPPDGQQDSECNRN. Over residues 104-118 the composition is skewed to basic and acidic residues; it reads ESREEIPGGEARTDP. A coiled-coil region spans residues 153 to 464; sequence EEKLAALCKK…LKEQVSIKAA (312 aa). At tyrosine 283 the chain carries Phosphotyrosine. The segment at 486 to 528 is disordered; sequence HKELNTSSKRALGAHLEAEPKSQRSAVQKPPSTGSAPAIESVD. Over residues 508–520 the composition is skewed to polar residues; it reads QRSAVQKPPSTGS. Serine 517 carries the phosphoserine modification.

This sequence belongs to the taxilin family. Binds to the C-terminal coiled coil region of syntaxin family members STX1A, STX3A and STX4A. Forms a heterodimer with ATF4 in osteoblasts. Ubiquitously expressed. Expressed at high level in heart and skeletal muscle. Expressed in brain, placenta, lung, liver, kidney and pancreas.

It localises to the nucleus membrane. It is found in the cytoplasm. The protein localises to the cytosol. May be involved in intracellular vesicle traffic. Inhibits ATF4-mediated transcription, possibly by dimerizing with ATF4 to form inactive dimers that cannot bind DNA. May be involved in regulating bone mass density through an ATF4-dependent pathway. May be involved in cell cycle progression. This chain is Gamma-taxilin (TXLNG), found in Homo sapiens (Human).